Here is a 415-residue protein sequence, read N- to C-terminus: MFS-type transporter FVEG_12626 (415 aa).

The span at 1–18 (MDPDTEQMRVEKPNHEQP) shows a compositional bias: basic and acidic residues. The interval 1–22 (MDPDTEQMRVEKPNHEQPKPNT) is disordered. 6 helical membrane-spanning segments follow: residues 27–47 (GGFK…VGVF), 63–83 (TVSW…PFVG), 93–113 (YLLL…SISS), 118–138 (YILS…YPSF), 151–171 (LALG…PIVV), and 178–198 (IGFG…LLVT). Residue asparagine 199 is glycosylated (N-linked (GlcNAc...) asparagine). A run of 6 helical transmembrane segments spans residues 227-247 (FILT…PITF), 264-284 (YLVS…GYIA), 290-310 (FNVS…LWLP), 318-338 (IAFA…SPAL), 354-374 (TMYA…GALI), and 386-406 (VFAG…RLYI).

Belongs to the major facilitator superfamily. Monocarboxylate porter (TC 2.A.1.13) family.

It localises to the membrane. In terms of biological role, MFS-type transporter; part of the Fusarium detoxification of benzoxazolinone cluster 2 (FDB2) involved in the degradation of benzoxazolinones produced by the host plant. Maize, wheat, and rye produce the 2 benzoxazinone phytoanticipins 2,4-dihy-droxy-7-methoxy-1,4-benzoxazin-3-one (DIMBOA) and 2,4-dihydroxy-1,4-benzoxazin-3-one (DIBOA) that, due to their inherent instability once released, spontaneously degrade to the more stable corresponding benzoxazolinones, 6-methoxy-2-benzoxazolinone (MBOA) and 2-benzoxazolinone (BOA), respectively. The sequence is that of MFS-type transporter FVEG_12626 from Gibberella moniliformis (strain M3125 / FGSC 7600) (Maize ear and stalk rot fungus).